The primary structure comprises 89 residues: Protein S100-A8 (89 aa).

EF-hand domains lie at 12-47 (LIDV…KFMK) and 46-81 (MKKK…VGLE). Positions 17 and 27 each coordinate Zn(2+). Ca(2+) is bound at residue aspartate 33. Residue cysteine 42 is modified to S-nitrosocysteine. Residues aspartate 59, asparagine 61, aspartate 63, and glutamate 70 each coordinate Ca(2+). Histidine 83 lines the Zn(2+) pocket.

The protein belongs to the S-100 family. In terms of assembly, homodimer. Preferentially exists as a heterodimer or heterotetramer with S100A9 known as calprotectin (S100A8/A9). S100A8 interacts with AGER, ATP2A2 and with the heterodimeric complex formed by TLR4 and LY96. Calprotectin (S100A8/9) interacts with CEACAM3 and tubulin filaments in a calcium-dependent manner. Heterotetrameric calprotectin (S100A8/A9) interacts with ANXA6 and associates with tubulin filaments in activated monocytes. S100A8 and calprotectin (S100A8/9) interact with NCF2/P67PHOX, RAC1 and RAC2. Calprotectin (S100A8/9) interacts with CYBA and CYBB. Calprotectin (S100A8/9) interacts with NOS2 to form the iNOS-S100A8/A9 transnitrosylase complex. Calprotectin (S100A8/9) interacts with CD69. Found essentially in phagocytic cells.

The protein resides in the secreted. Its subcellular location is the cytoplasm. The protein localises to the cytoskeleton. It localises to the cell membrane. In terms of biological role, S100A8 is a calcium- and zinc-binding protein which plays a prominent role in the regulation of inflammatory processes and immune response. It can induce neutrophil chemotaxis and adhesion. Predominantly found as calprotectin (S100A8/A9) which has a wide plethora of intra- and extracellular functions. The intracellular functions include: facilitating leukocyte arachidonic acid trafficking and metabolism, modulation of the tubulin-dependent cytoskeleton during migration of phagocytes and activation of the neutrophilic NADPH-oxidase. Also participates in regulatory T-cell differentiation together with CD69. Activates NADPH-oxidase by facilitating the enzyme complex assembly at the cell membrane, transferring arachidonic acid, an essential cofactor, to the enzyme complex and S100A8 contributes to the enzyme assembly by directly binding to NCF2/P67PHOX. The extracellular functions involve pro-inflammatory, antimicrobial, oxidant-scavenging and apoptosis-inducing activities. Its pro-inflammatory activity includes recruitment of leukocytes, promotion of cytokine and chemokine production, and regulation of leukocyte adhesion and migration. Acts as an alarmin or a danger associated molecular pattern (DAMP) molecule and stimulates innate immune cells via binding to pattern recognition receptors such as Toll-like receptor 4 (TLR4) and receptor for advanced glycation endproducts (AGER). Binding to TLR4 and AGER activates the MAP-kinase and NF-kappa-B signaling pathways resulting in the amplification of the pro-inflammatory cascade. Has antimicrobial activity towards bacteria and fungi and exerts its antimicrobial activity probably via chelation of Zn(2+) which is essential for microbial growth. Can induce cell death via autophagy and apoptosis and this occurs through the cross-talk of mitochondria and lysosomes via reactive oxygen species (ROS) and the process involves BNIP3. Can regulate neutrophil number and apoptosis by an anti-apoptotic effect; regulates cell survival via ITGAM/ITGB and TLR4 and a signaling mechanism involving MEK-ERK. Its role as an oxidant scavenger has a protective role in preventing exaggerated tissue damage by scavenging oxidants. The iNOS-S100A8/A9 transnitrosylase complex is proposed to direct selective inflammatory stimulus-dependent S-nitrosylation of multiple targets such as GAPDH, ANXA5, EZR, MSN and VIM by recognizing a [IL]-x-C-x-x-[DE] motif; S100A8 seems to contribute to S-nitrosylation site selectivity. The protein is Protein S100-A8 (S100A8) of Bos taurus (Bovine).